Consider the following 180-residue polypeptide: Large ribosomal subunit protein uL5 (180 aa).

This sequence belongs to the universal ribosomal protein uL5 family. In terms of assembly, part of the 50S ribosomal subunit; part of the 5S rRNA/L5/L18/L25 subcomplex. Contacts the 5S rRNA and the P site tRNA. Forms a bridge to the 30S subunit in the 70S ribosome.

Functionally, this is one of the proteins that bind and probably mediate the attachment of the 5S RNA into the large ribosomal subunit, where it forms part of the central protuberance. In the 70S ribosome it contacts protein S13 of the 30S subunit (bridge B1b), connecting the 2 subunits; this bridge is implicated in subunit movement. Contacts the P site tRNA; the 5S rRNA and some of its associated proteins might help stabilize positioning of ribosome-bound tRNAs. This Synechococcus sp. (strain JA-2-3B'a(2-13)) (Cyanobacteria bacterium Yellowstone B-Prime) protein is Large ribosomal subunit protein uL5.